The primary structure comprises 453 residues: Exodeoxyribonuclease 7 large subunit (453 aa).

The protein belongs to the XseA family. Heterooligomer composed of large and small subunits.

It is found in the cytoplasm. It carries out the reaction Exonucleolytic cleavage in either 5'- to 3'- or 3'- to 5'-direction to yield nucleoside 5'-phosphates.. Its function is as follows. Bidirectionally degrades single-stranded DNA into large acid-insoluble oligonucleotides, which are then degraded further into small acid-soluble oligonucleotides. This Geobacter metallireducens (strain ATCC 53774 / DSM 7210 / GS-15) protein is Exodeoxyribonuclease 7 large subunit.